The primary structure comprises 326 residues: Target of rapamycin complex subunit lst8 (326 aa).

7 WD repeats span residues 1–37, 40–80, 83–122, 126–165, 168–207, 218–257, and 268–309; these read MNVN…CTRT, HQDS…PVIN, GVSK…LQCQ, QVNA…NEQL, EPDV…GDEV, AHKR…LMTE, and TSRG…REYS.

Belongs to the WD repeat LST8 family. Part of the mechanistic target of rapamycin complex 1 (mTORC1) which contains MTOR, MLST8 and RPTOR. Component of the mechanistic target of rapamycin complex 2 (mTORC2), consisting in two heterotretramers composed of MTOR, MLST8, RICTOR and MAPKAP1/SIN1.

It is found in the lysosome membrane. Its subcellular location is the cytoplasm. Subunit of both mTORC1 and mTORC2, which regulates cell growth and survival in response to nutrient and hormonal signals. mTORC1 is activated in response to growth factors or amino acids. In response to nutrients, mTORC1 is recruited to the lysosome membrane and promotes protein, lipid and nucleotide synthesis by phosphorylating several substrates, such as ribosomal protein S6 kinase (RPS6KB1 and RPS6KB2) and EIF4EBP1 (4E-BP1). In the same time, it inhibits catabolic pathways by phosphorylating the autophagy initiation components ULK1 and ATG13, as well as transcription factor TFEB, a master regulators of lysosomal biogenesis and autophagy. The mTORC1 complex is inhibited in response to starvation and amino acid depletion. Within mTORC1, MLST8 interacts directly with MTOR and enhances its kinase activity. In nutrient-poor conditions, stabilizes the MTOR-RPTOR interaction and favors RPTOR-mediated inhibition of MTOR activity. As part of the mTORC2 complex, transduces signals from growth factors to pathways involved in proliferation, cytoskeletal organization, lipogenesis and anabolic output. mTORC2 is also activated by growth factors, but seems to be nutrient-insensitive. In response to growth factors, mTORC2 phosphorylates and activates AGC protein kinase family members, including AKT (AKT1, AKT2 and AKT3), PKC (PRKCA, PRKCB and PRKCE) and SGK1. mTORC2 functions upstream of Rho GTPases to regulate the actin cytoskeleton, probably by activating one or more Rho-type guanine nucleotide exchange factors. mTORC2 promotes the serum-induced formation of stress-fibers or F-actin. Within mTORC2, MLST8 acts as a bridge between MAPKAP1/SIN1 and MTOR. The protein is Target of rapamycin complex subunit lst8 (mlst8) of Danio rerio (Zebrafish).